A 268-amino-acid polypeptide reads, in one-letter code: Cell division coordinator CpoB (268 aa).

An N-terminal signal peptide occupies residues 1 to 21 (MRMCRRVVTVLALSLPLAAWA). A coiled-coil region spans residues 58 to 94 (QLFMQLQQMQDQLSRQQGIIEELQNDVSRMKQENLER). Residues 104–146 (SGAAPAATPDNSSGGGASNAAPDAAAGAAAQQPAGSSQPGDPA) are disordered. Over residues 121–143 (SNAAPDAAAGAAAQQPAGSSQPG) the composition is skewed to low complexity. TPR repeat units lie at residues 149–181 (KLYY…YPNS), 185–218 (GNAQ…YPKH), and 222–255 (PDSL…YPGT).

It belongs to the CpoB family.

Its subcellular location is the periplasm. Functionally, mediates coordination of peptidoglycan synthesis and outer membrane constriction during cell division. This Pseudomonas putida (strain ATCC 47054 / DSM 6125 / CFBP 8728 / NCIMB 11950 / KT2440) protein is Cell division coordinator CpoB.